The sequence spans 254 residues: MAVITMKSLLEAGVHFGHQVKRLDPRMKRFIFSERNEIHILDLQKTLQGIKDSYELVQSVIKSGKKVLFVGTKKQASEIIEQEAKRSDMPYVNNRWLGGMLSNFNTIKKSVQKLKKLEKMEIDGTFEMISKKEVSQLNREKLKLSKNLTGIKDMEELPGAVFIIDPKREQIVINEARKLGIPIISVVDTNCNPDVIDCPIPGNDDAIRSVALFTKIISDAILESDKEVGIQIVENLNEEDLMSEIEVKNEKKEL.

It belongs to the universal ribosomal protein uS2 family.

The sequence is that of Small ribosomal subunit protein uS2 from Borrelia hermsii (strain HS1 / DAH).